Reading from the N-terminus, the 738-residue chain is Multifunctional procollagen lysine hydroxylase and glycosyltransferase LH3 (738 aa).

Positions 1–24 (MTSSGPGPRFLLLLPLLLPPAASA) are cleaved as a signal peptide. The required for glycosyltransferase activity stretch occupies residues 25–290 (SDRPRGRDPV…FCNQDRRTLP (266 aa)). 44 to 46 (VAT) is a UDP binding site. N-linked (GlcNAc...) asparagine glycosylation occurs at Asn-63. Mn(2+) is bound by residues Asp-112, Asp-115, and His-253. 112-114 (DSY) serves as a coordination point for UDP. 256–259 (GPTK) is a UDP binding site. Intrachain disulfides connect Cys-279–Cys-282 and Cys-379–Cys-385. The interval 295–520 (PPRVFLAVFV…EFGRLLATSR (226 aa)) is accessory region. Residue Asn-548 is glycosylated (N-linked (GlcNAc...) asparagine). Cys-563 and Cys-698 form a disulfide bridge. 2 residues coordinate 2-oxoglutarate: Arg-599 and Tyr-656. Positions 647 to 738 (RAVMNFVVRY…RYIMVSFVDP (92 aa)) constitute a Fe2OG dioxygenase domain. The Fe cation site is built by His-667 and Asp-669. An important for dimerization region spans residues 672 to 715 (TFTLNVALNHKGLDYEGGGCRFLRYDCVISSPRKGWALLHPGRL). Asn-676 contacts 2-oxoglutarate. His-719 lines the Fe cation pocket. Residue Arg-729 coordinates 2-oxoglutarate.

Homodimer. Fe(2+) is required as a cofactor. L-ascorbate serves as cofactor. The cofactor is Mn(2+).

Its subcellular location is the rough endoplasmic reticulum. It is found in the endoplasmic reticulum lumen. It localises to the endoplasmic reticulum membrane. The protein resides in the secreted. The protein localises to the extracellular space. It carries out the reaction L-lysyl-[collagen] + 2-oxoglutarate + O2 = (5R)-5-hydroxy-L-lysyl-[collagen] + succinate + CO2. The enzyme catalyses (5R)-5-hydroxy-L-lysyl-[collagen] + UDP-alpha-D-galactose = (5R)-5-O-(beta-D-galactosyl)-5-hydroxy-L-lysyl-[collagen] + UDP + H(+). The catalysed reaction is (5R)-5-O-(beta-D-galactosyl)-5-hydroxy-L-lysyl-[collagen] + UDP-alpha-D-glucose = (5R)-5-O-[alpha-D-glucosyl-(1-&gt;2)-beta-D-galactosyl]-5-hydroxy-L-lysyl-[collagen] + UDP + H(+). Functionally, multifunctional enzyme that catalyzes a series of post-translational modifications on Lys residues in procollagen. Plays a redundant role in catalyzing the formation of hydroxylysine residues in -Xaa-Lys-Gly- sequences in collagens. Plays a redundant role in catalyzing the transfer of galactose onto hydroxylysine groups, giving rise to galactosyl 5-hydroxylysine. Has an essential role by catalyzing the subsequent transfer of glucose moieties, giving rise to 1,2-glucosylgalactosyl-5-hydroxylysine residues. Catalyzes hydroxylation and glycosylation of Lys residues in the MBL1 collagen-like domain, giving rise to hydroxylysine and 1,2-glucosylgalactosyl-5-hydroxylysine residues. Catalyzes hydroxylation and glycosylation of Lys residues in the ADIPOQ collagen-like domain, giving rise to hydroxylysine and 1,2-glucosylgalactosyl-5-hydroxylysine residues. Essential for normal biosynthesis and secretion of type IV collagens. Essential for normal formation of basement membranes. This Pongo abelii (Sumatran orangutan) protein is Multifunctional procollagen lysine hydroxylase and glycosyltransferase LH3 (PLOD3).